We begin with the raw amino-acid sequence, 411 residues long: Trigger factor (411 aa).

The PPIase FKBP-type domain occupies 162–240 (EDLVVIDYTT…IKEVKRRQNI (79 aa)).

The protein belongs to the FKBP-type PPIase family. Tig subfamily.

Its subcellular location is the cytoplasm. The catalysed reaction is [protein]-peptidylproline (omega=180) = [protein]-peptidylproline (omega=0). In terms of biological role, involved in protein export. Acts as a chaperone by maintaining the newly synthesized protein in an open conformation. Functions as a peptidyl-prolyl cis-trans isomerase. The polypeptide is Trigger factor (Thermodesulfovibrio yellowstonii (strain ATCC 51303 / DSM 11347 / YP87)).